The sequence spans 772 residues: UDP-N-acetylmuramoyl-L-alanyl-D-glutamate--2,6-diaminopimelate ligase MurE homolog, chloroplastic (772 aa).

Residues 1–40 (MAFTFLSPHPVFLSLTGTTSSFSYKPVLLPFSRNSRTLTV) constitute a chloroplast transit peptide. Disordered regions lie at residues 42-87 (AGPA…KLEE) and 141-168 (LLKP…DVTD). Composition is skewed to acidic residues over residues 54 to 63 (ADDDPPEAPE) and 158 to 168 (EGNEEEGDVTD). At Ser-194 the chain carries Phosphoserine.

This sequence belongs to the MurCDEF family. MurE subfamily. As to quaternary structure, component of the plastid-encoded plastid RNA polymerase (PEP) complex. As to expression, expressed in leaves and flowers.

The protein resides in the plastid. It localises to the chloroplast. Its function is as follows. Involved in chloroplast biogenesis. Required for thylakoid membrane development. Seems to be required for plastid-encoded plastid RNA polymerase (PEP)-dependent gene expression. In Arabidopsis thaliana (Mouse-ear cress), this protein is UDP-N-acetylmuramoyl-L-alanyl-D-glutamate--2,6-diaminopimelate ligase MurE homolog, chloroplastic.